The primary structure comprises 344 residues: Axoneme-associated protein mst101(1) (344 aa).

Repeat copies occupy residues 74 to 89 (KKKC…EAAE), 90 to 105 (KKKC…EAAE), 106 to 121 (KKKC…EAAE), 122 to 137 (KKKC…EAAE), 138 to 153 (KKKC…EAAE), 154 to 169 (KKKC…EAAE), 170 to 185 (KKKC…CAEL), 186 to 201 (AKKE…CAEA), 202 to 217 (AKKE…CEER), 218 to 233 (AKKE…CEER), 234 to 249 (AKKE…CAEA), and 250 to 265 (AKKE…CAEA). The segment at 74–344 (KKKCAEAAKK…AAQKKCEPKK (271 aa)) is 17 X 16 AA approximate tandem repeats of K-K-K-C-X-E-X-A-[KQ]-K-X-X-E-X-A-X. The tract at residues 206 to 244 (KEAAEKKKCEERAKKEKEAAEKKKCEERAKKEKEAAEKK) is disordered. One copy of the 13; approximate repeat lies at 266-281 (AQKKKCAELAKKAKEA). The stretch at 282–297 (AEKKKCAKKAGEKGSK) is one 14; approximate repeat. The span at 285–315 (KKCAKKAGEKGSKQSGSDKGKKNGKKNDMKN) shows a compositional bias: basic and acidic residues. Positions 285 to 318 (KKCAKKAGEKGSKQSGSDKGKKNGKKNDMKNKCA) are disordered. Residues 298–313 (QSGSDKGKKNGKKNDM) form a 15; approximate repeat. Copy 16 of the repeat occupies 314-329 (KNKCAMLAKKAKEEAL). One copy of the 17; truncated repeat lies at 330 to 344 (KKKCAAAQKKCEPKK).

In terms of tissue distribution, testis. Located in spermatocytes and spermatid bundles.

The protein localises to the cytoplasm. In terms of biological role, possible structural role in the sperm tail. It is associated with axonemal structures. The protein is Axoneme-associated protein mst101(1) (mst101(1)) of Drosophila hydei (Fruit fly).